Consider the following 124-residue polypeptide: Membrane-anchored ubiquitin-fold protein 2 (124 aa).

The region spanning 8–74 is the Ubiquitin-like domain; it reads LEIKFRLNDG…LENNKTVGDC (67 aa). S-palmitoyl cysteine attachment occurs at residues C115, C117, C119, and C124.

Post-translationally, acylated protein. Probably modified with palmitate. As to expression, ubiquitous, but three fold higher expression in stamens.

The protein localises to the cell membrane. Functionally, may serve as docking site to facilitate the association of other proteins to the plasma membrane. This Arabidopsis thaliana (Mouse-ear cress) protein is Membrane-anchored ubiquitin-fold protein 2 (MUB2).